A 46-amino-acid chain; its full sequence is Phoratoxin (46 aa).

Disulfide bonds link C3–C40, C4–C32, and C16–C26. H46 bears the Blocked carboxyl end (His) mark.

It belongs to the plant thionin (TC 1.C.44) family.

It is found in the secreted. Thionins are small plant proteins which are toxic to animal cells. They seem to exert their toxic effect at the level of the cell membrane. Their precise function is not known. In Phoradendron leucarpum subsp. tomentosum (California mistletoe), this protein is Phoratoxin.